The sequence spans 229 residues: MIQVKICGITNKNEIKYLNILKPEYMGFVFTKSKRQVTVREAKQLSNNLDKQIKIVGVFKDNSIDEILDVINILPLNIIQLHGKEDENFISSLKARVEKSVSIWKALSISDAENIRKYADHKYRDSIDNILIDGDKPGSGETFPLEDICELLKVDSNKENNCNLTNNTCSFFLAGGITPENVAERIVKVSPYGIDVSSGIEITNEDGTRTKSFEKMRSLIEKVRAININ.

Belongs to the TrpF family.

It catalyses the reaction N-(5-phospho-beta-D-ribosyl)anthranilate = 1-(2-carboxyphenylamino)-1-deoxy-D-ribulose 5-phosphate. The protein operates within amino-acid biosynthesis; L-tryptophan biosynthesis; L-tryptophan from chorismate: step 3/5. The polypeptide is N-(5'-phosphoribosyl)anthranilate isomerase (Clostridium beijerinckii (strain ATCC 51743 / NCIMB 8052) (Clostridium acetobutylicum)).